Consider the following 330-residue polypeptide: GTP 3',8-cyclase (330 aa).

The Radical SAM core domain maps to 14–225 (RFGRTVDYVR…RERLADAYPE (212 aa)). Residue Arg-23 coordinates GTP. 2 residues coordinate [4Fe-4S] cluster: Cys-30 and Cys-34. Tyr-36 is an S-adenosyl-L-methionine binding site. Cys-37 is a [4Fe-4S] cluster binding site. GTP is bound at residue Arg-70. Position 74 (Gly-74) interacts with S-adenosyl-L-methionine. Position 101 (Thr-101) interacts with GTP. Ser-125 provides a ligand contact to S-adenosyl-L-methionine. GTP is bound at residue Lys-162. 2 residues coordinate [4Fe-4S] cluster: Cys-259 and Cys-262. 264 to 266 (KLR) provides a ligand contact to GTP. Cys-276 is a [4Fe-4S] cluster binding site. Residues 309–318 (KPKDGLKSSH) are compositionally biased toward basic and acidic residues. The segment at 309-330 (KPKDGLKSSHDTAASSMSQIGG) is disordered. A compositionally biased stretch (polar residues) spans 319–330 (DTAASSMSQIGG).

This sequence belongs to the radical SAM superfamily. MoaA family. As to quaternary structure, monomer and homodimer. The cofactor is [4Fe-4S] cluster.

It carries out the reaction GTP + AH2 + S-adenosyl-L-methionine = (8S)-3',8-cyclo-7,8-dihydroguanosine 5'-triphosphate + 5'-deoxyadenosine + L-methionine + A + H(+). It functions in the pathway cofactor biosynthesis; molybdopterin biosynthesis. Functionally, catalyzes the cyclization of GTP to (8S)-3',8-cyclo-7,8-dihydroguanosine 5'-triphosphate. The sequence is that of GTP 3',8-cyclase from Chlorobaculum tepidum (strain ATCC 49652 / DSM 12025 / NBRC 103806 / TLS) (Chlorobium tepidum).